The sequence spans 430 residues: Trigger factor (430 aa).

The region spanning 157–242 is the PPIase FKBP-type domain; the sequence is GDLVALETWS…AVEVSEPVLP (86 aa).

Belongs to the FKBP-type PPIase family. Tig subfamily.

It is found in the cytoplasm. The catalysed reaction is [protein]-peptidylproline (omega=180) = [protein]-peptidylproline (omega=0). In terms of biological role, involved in protein export. Acts as a chaperone by maintaining the newly synthesized protein in an open conformation. Functions as a peptidyl-prolyl cis-trans isomerase. The polypeptide is Trigger factor (Xanthomonas oryzae pv. oryzae (strain PXO99A)).